A 497-amino-acid chain; its full sequence is Probable cytosol aminopeptidase (497 aa).

Positions 267 and 272 each coordinate Mn(2+). Residue Lys279 is part of the active site. Residues Asp290, Asp349, and Glu351 each coordinate Mn(2+). The active site involves Arg353.

The protein belongs to the peptidase M17 family. It depends on Mn(2+) as a cofactor.

The protein resides in the cytoplasm. The catalysed reaction is Release of an N-terminal amino acid, Xaa-|-Yaa-, in which Xaa is preferably Leu, but may be other amino acids including Pro although not Arg or Lys, and Yaa may be Pro. Amino acid amides and methyl esters are also readily hydrolyzed, but rates on arylamides are exceedingly low.. The enzyme catalyses Release of an N-terminal amino acid, preferentially leucine, but not glutamic or aspartic acids.. Presumably involved in the processing and regular turnover of intracellular proteins. Catalyzes the removal of unsubstituted N-terminal amino acids from various peptides. This is Probable cytosol aminopeptidase from Nitrosomonas eutropha (strain DSM 101675 / C91 / Nm57).